The chain runs to 256 residues: Isoprenyl transferase (256 aa).

The interval 1 to 22 (MLEKFSKWKGNRSNHTTPSHSL) is disordered. Asp-36 is an active-site residue. Asp-36 contacts Mg(2+). Residues 37–40 (GNGR), Trp-41, Arg-49, His-53, and 81–83 (STE) each bind substrate. Asn-84 (proton acceptor) is an active-site residue. Residues Trp-85, Arg-87, Arg-204, and 210–212 (RLS) each bind substrate. Glu-223 contributes to the Mg(2+) binding site.

This sequence belongs to the UPP synthase family. Homodimer. Requires Mg(2+) as cofactor.

Functionally, catalyzes the condensation of isopentenyl diphosphate (IPP) with allylic pyrophosphates generating different type of terpenoids. This Halalkalibacterium halodurans (strain ATCC BAA-125 / DSM 18197 / FERM 7344 / JCM 9153 / C-125) (Bacillus halodurans) protein is Isoprenyl transferase.